A 385-amino-acid polypeptide reads, in one-letter code: Protein pelota homolog (385 aa).

Residue Lys-162 forms a Glycyl lysine isopeptide (Lys-Gly) (interchain with G-Cter in SUMO2) linkage. Phosphoserine occurs at positions 374, 380, 381, and 382.

This sequence belongs to the eukaryotic release factor 1 family. Pelota subfamily. In terms of assembly, component of the Pelota-HBS1L complex, also named Dom34-Hbs1 complex, composed of PELO and HBS1L. Interacts with PINK1. Interacts with ABCE1. Interacts with CNOT4. Requires a divalent metal cation as cofactor.

It localises to the cytoplasm. In terms of biological role, component of the Pelota-HBS1L complex, a complex that recognizes stalled ribosomes and triggers the No-Go Decay (NGD) pathway. In the Pelota-HBS1L complex, PELO recognizes ribosomes stalled at the 3' end of an mRNA and engages stalled ribosomes by destabilizing mRNA in the mRNA channel. Following mRNA extraction from stalled ribosomes by the SKI complex, the Pelota-HBS1L complex promotes recruitment of ABCE1, which drives the disassembly of stalled ribosomes, followed by degradation of damaged mRNAs as part of the NGD pathway. As part of the PINK1-regulated signaling, upon mitochondrial damage is recruited to the ribosome/mRNA-ribonucleoprotein complex associated to mitochondrial outer membrane thereby enabling the recruitment of autophagy receptors and induction of mitophagy. In Bos taurus (Bovine), this protein is Protein pelota homolog (PELO).